The chain runs to 444 residues: tRNA-2-methylthio-N(6)-dimethylallyladenosine synthase (444 aa).

The MTTase N-terminal domain occupies 2 to 119 (KKLYIRTFGC…LPSMLNEVLT (118 aa)). Positions 11, 48, 82, 161, 165, and 168 each coordinate [4Fe-4S] cluster. The Radical SAM core domain maps to 147–379 (KTSSVTAFVS…QKTIDKNTER (233 aa)). One can recognise a TRAM domain in the interval 382 to 444 (KSMVGSVQKI…GNSLVGNLIA (63 aa)).

The protein belongs to the methylthiotransferase family. MiaB subfamily. As to quaternary structure, monomer. [4Fe-4S] cluster serves as cofactor.

The protein localises to the cytoplasm. It carries out the reaction N(6)-dimethylallyladenosine(37) in tRNA + (sulfur carrier)-SH + AH2 + 2 S-adenosyl-L-methionine = 2-methylsulfanyl-N(6)-dimethylallyladenosine(37) in tRNA + (sulfur carrier)-H + 5'-deoxyadenosine + L-methionine + A + S-adenosyl-L-homocysteine + 2 H(+). Its function is as follows. Catalyzes the methylthiolation of N6-(dimethylallyl)adenosine (i(6)A), leading to the formation of 2-methylthio-N6-(dimethylallyl)adenosine (ms(2)i(6)A) at position 37 in tRNAs that read codons beginning with uridine. The sequence is that of tRNA-2-methylthio-N(6)-dimethylallyladenosine synthase from Ruthia magnifica subsp. Calyptogena magnifica.